Reading from the N-terminus, the 341-residue chain is Glycerol-3-phosphate dehydrogenase [NAD(P)+] (341 aa).

Residues serine 14, phenylalanine 15, arginine 35, and lysine 108 each coordinate NADPH. The sn-glycerol 3-phosphate site is built by lysine 108 and glycine 136. Alanine 140 provides a ligand contact to NADPH. Positions 191, 244, 254, 255, and 256 each coordinate sn-glycerol 3-phosphate. The active-site Proton acceptor is the lysine 191. Arginine 255 contributes to the NADPH binding site. 2 residues coordinate NADPH: valine 279 and glutamate 281.

This sequence belongs to the NAD-dependent glycerol-3-phosphate dehydrogenase family.

The protein resides in the cytoplasm. The catalysed reaction is sn-glycerol 3-phosphate + NAD(+) = dihydroxyacetone phosphate + NADH + H(+). It catalyses the reaction sn-glycerol 3-phosphate + NADP(+) = dihydroxyacetone phosphate + NADPH + H(+). It participates in membrane lipid metabolism; glycerophospholipid metabolism. Catalyzes the reduction of the glycolytic intermediate dihydroxyacetone phosphate (DHAP) to sn-glycerol 3-phosphate (G3P), the key precursor for phospholipid synthesis. The chain is Glycerol-3-phosphate dehydrogenase [NAD(P)+] from Pseudomonas entomophila (strain L48).